A 548-amino-acid polypeptide reads, in one-letter code: (S)-beta-macrocarpene synthase (548 aa).

Positions 302 and 306 each coordinate Mg(2+). Positions 302, 306, 443, and 446 each coordinate substrate. The short motif at 302 to 306 (DDTLD) is the DDXXD motif element. Asn446, Ser450, and Glu454 together coordinate Mg(2+).

This sequence belongs to the terpene synthase family. Monomer. Requires Mg(2+) as cofactor. It depends on Mn(2+) as a cofactor. In terms of tissue distribution, expressed in roots. Not detected in leaves, unless damaged by herbivory or infected by fungi.

It is found in the cytoplasm. It catalyses the reaction (S)-beta-bisabolene = (S)-beta-macrocarpene. It carries out the reaction (2E,6E)-farnesyl diphosphate = (S)-beta-bisabolene + diphosphate. The enzyme catalyses (2E)-geranyl diphosphate = (4S)-limonene + diphosphate. The catalysed reaction is (2E)-geranyl diphosphate = beta-myrcene + diphosphate. It catalyses the reaction (2E)-geranyl diphosphate = terpinolene + diphosphate. It carries out the reaction (2E)-geranyl diphosphate + H2O = (S)-linalool + diphosphate. Its pathway is secondary metabolite biosynthesis; terpenoid biosynthesis. Involved in the biosynthesis of the bicyclic sesquiterpene (S)-beta-macrocarpene. Can use both geranyl diphosphate and farnesyl diphosphate as substrate, but not geranylgeranyl diphosphate. Produces mainly (S)-beta-macrocarpene, but also smaller amounts of beta-bisabolene and (E)-beta-farnesene when used with farnesyl diphosphate as substrate. In the presence of geranyl diphosphate, produces the acyclic monoterpenes beta-myrcene and linalool along with minor amounts of the cyclic compounds limonene, alpha-thujene, sabinene and alpha-terpinolene. May be involved in plant defense. The sequence is that of (S)-beta-macrocarpene synthase from Zea mays (Maize).